The following is a 445-amino-acid chain: Phosphoglucosamine mutase 1 (445 aa).

Catalysis depends on serine 102, which acts as the Phosphoserine intermediate. Mg(2+) contacts are provided by serine 102, aspartate 241, aspartate 243, and aspartate 245. A Phosphoserine modification is found at serine 102.

This sequence belongs to the phosphohexose mutase family. Mg(2+) is required as a cofactor. Post-translationally, activated by phosphorylation.

It catalyses the reaction alpha-D-glucosamine 1-phosphate = D-glucosamine 6-phosphate. Functionally, catalyzes the conversion of glucosamine-6-phosphate to glucosamine-1-phosphate. This is Phosphoglucosamine mutase 1 from Shewanella frigidimarina (strain NCIMB 400).